Here is a 100-residue protein sequence, read N- to C-terminus: Cell division protein DrpB (100 aa).

The Cytoplasmic portion of the chain corresponds to 1 to 16 (MEYGSTKMEERLSRSP). A helical membrane pass occupies residues 17–37 (GGKLALWAFYTWCGYFVWAMA). The Periplasmic portion of the chain corresponds to 38–64 (RYIWVMSRIPDAPVSGFESDLGSTAGK). A helical membrane pass occupies residues 65 to 85 (WLGALVGFLFMALVGALLGSI). Topologically, residues 86–100 (AWYTRPRPARSRRYE) are cytoplasmic.

It belongs to the DrpB family. As to quaternary structure, bacterial adenylate cyclase hybrid (BACTH) studies show interaction of this protein with DamX, FtsI, FtsN, FtsQ, YmgF, DedD, FtsA and MalF, as well as weaker interactions with DedD, MalG and PBP2, but this assay often generates false positive results.

The protein localises to the cell inner membrane. In terms of biological role, a non-essential division protein that localizes to the septal ring in low ionic strength medium. Functionally, localizes to the septal ring in about 30% of observed cells before cell constriction occurs; localization occurs in low ionic strength medium (0 NaCl) and requires FtsZ but not FtsEX. Overexpression partially restores correct FtsI localization to the division septum in an ftsEX deletion. Isolated as a multicopy suppressor of an ftsEX deletion mutant; it does not suppress other cell division defects (e.g. ftsA, ftsI, ftsQ or ftsZ). The sequence is that of Cell division protein DrpB from Escherichia coli (strain K12).